Consider the following 132-residue polypeptide: Interleukin-5 (132 aa).

Residues 1 to 19 form the signal peptide; it reads MRMLLCLNVLTLSCVWAIA. 3 N-linked (GlcNAc...) asparagine glycosylation sites follow: asparagine 45, asparagine 74, and asparagine 88.

Belongs to the IL-5 family. In terms of assembly, homodimer; disulfide-linked. Interacts with IL5RA. Interacts with CSF2RB.

It is found in the secreted. In terms of biological role, homodimeric cytokine expressed predominantly by T-lymphocytes and NK cells that plays an important role in the survival, differentiation, and chemotaxis of eosinophils. Acts also on activated and resting B-cells to induce immunoglobulin production, growth, and differentiation. Mechanistically, exerts its biological effects through a receptor composed of IL5RA subunit and the cytokine receptor common subunit beta/CSF2RB. Binding to the receptor leads to activation of various kinases including LYN, SYK and JAK2 and thereby propagates signals through the RAS-MAPK and JAK-STAT5 pathways respectively. The polypeptide is Interleukin-5 (Il5) (Rattus norvegicus (Rat)).